We begin with the raw amino-acid sequence, 146 residues long: Hemoglobin subunit beta-1 (146 aa).

The Globin domain maps to 2 to 146; the sequence is EWTDAEKSTI…VVAAMGSRYF (145 aa). Heme b-binding residues include His63 and His92.

The protein belongs to the globin family. In terms of assembly, heterotetramer of two alpha chains and two beta chains. As to expression, red blood cells.

In terms of biological role, involved in oxygen transport from gills to the various peripheral tissues. The polypeptide is Hemoglobin subunit beta-1 (hbb1) (Oncorhynchus mykiss (Rainbow trout)).